The following is a 476-amino-acid chain: Probable cytosolic Fe-S cluster assembly factor GF22738 (476 aa).

The [4Fe-4S] cluster site is built by Cys-23, Cys-68, Cys-71, Cys-74, Cys-187, Cys-243, Cys-395, and Cys-399.

The protein belongs to the NARF family.

Functionally, component of the cytosolic iron-sulfur (Fe/S) protein assembly machinery. Required for maturation of extramitochondrial Fe/S proteins. This chain is Probable cytosolic Fe-S cluster assembly factor GF22738, found in Drosophila ananassae (Fruit fly).